Here is a 383-residue protein sequence, read N- to C-terminus: uncharacterized protein (383 aa).

Disordered stretches follow at residues 27–66 (ENNNTNNNTNSNTNSNNKNNNNNNNNKSNNKKQNNNNKKP) and 242–281 (LITTKDSNEQTSSSSSSSTAITTNTNCSNSKSSSQPITRR). Low complexity-rich tracts occupy residues 28 to 63 (NNNTNNNTNSNTNSNNKNNNNNNNNKSNNKKQNNNN) and 242 to 275 (LITTKDSNEQTSSSSSSSTAITTNTNCSNSKSSS).

This is an uncharacterized protein from Dictyostelium discoideum (Social amoeba).